A 362-amino-acid polypeptide reads, in one-letter code: 4-hydroxythreonine-4-phosphate dehydrogenase (362 aa).

Threonine 149 contacts substrate. The a divalent metal cation site is built by histidine 184, histidine 229, and histidine 295. 3 residues coordinate substrate: lysine 303, asparagine 312, and arginine 321.

It belongs to the PdxA family. In terms of assembly, homodimer. The cofactor is a divalent metal cation.

The protein resides in the cytoplasm. It catalyses the reaction 4-(phosphooxy)-L-threonine + NAD(+) = 3-amino-2-oxopropyl phosphate + CO2 + NADH. The protein operates within cofactor biosynthesis; pyridoxine 5'-phosphate biosynthesis; pyridoxine 5'-phosphate from D-erythrose 4-phosphate: step 4/5. Functionally, catalyzes the NAD(P)-dependent oxidation of 4-(phosphooxy)-L-threonine (HTP) into 2-amino-3-oxo-4-(phosphooxy)butyric acid which spontaneously decarboxylates to form 3-amino-2-oxopropyl phosphate (AHAP). In Nostoc sp. (strain PCC 7120 / SAG 25.82 / UTEX 2576), this protein is 4-hydroxythreonine-4-phosphate dehydrogenase.